Here is a 295-residue protein sequence, read N- to C-terminus: Protease HtpX (295 aa).

2 helical membrane-spanning segments follow: residues 4-24 (ILLFLATNLAVVLIASITLSL) and 42-62 (QLLIFCAVFGFAGSLFSLFIS). His147 lines the Zn(2+) pocket. The active site involves Glu148. Position 151 (His151) interacts with Zn(2+). 2 helical membrane-spanning segments follow: residues 158–178 (VTLALIQGVVNTFVMFFARII) and 199–219 (VATIFAELVLGILASAIVMWF). Glu224 is a Zn(2+) binding site.

This sequence belongs to the peptidase M48B family. Zn(2+) is required as a cofactor.

The protein localises to the cell inner membrane. In Pseudomonas fluorescens (strain ATCC BAA-477 / NRRL B-23932 / Pf-5), this protein is Protease HtpX.